Consider the following 564-residue polypeptide: Arginine--tRNA ligase (564 aa).

Residues 130–140 carry the 'HIGH' region motif; the sequence is ANPTGSLHIGH.

The protein belongs to the class-I aminoacyl-tRNA synthetase family. As to quaternary structure, monomer.

The protein resides in the cytoplasm. The catalysed reaction is tRNA(Arg) + L-arginine + ATP = L-arginyl-tRNA(Arg) + AMP + diphosphate. This Malacoplasma penetrans (strain HF-2) (Mycoplasma penetrans) protein is Arginine--tRNA ligase.